The chain runs to 101 residues: Large ribosomal subunit protein uL23 (101 aa).

The protein belongs to the universal ribosomal protein uL23 family. As to quaternary structure, part of the 50S ribosomal subunit. Contacts protein L29, and trigger factor when it is bound to the ribosome.

One of the early assembly proteins it binds 23S rRNA. One of the proteins that surrounds the polypeptide exit tunnel on the outside of the ribosome. Forms the main docking site for trigger factor binding to the ribosome. In Trichodesmium erythraeum (strain IMS101), this protein is Large ribosomal subunit protein uL23.